The sequence spans 273 residues: 2-dehydro-3-deoxyphosphooctonate aldolase (273 aa).

The protein belongs to the KdsA family.

It is found in the cytoplasm. It catalyses the reaction D-arabinose 5-phosphate + phosphoenolpyruvate + H2O = 3-deoxy-alpha-D-manno-2-octulosonate-8-phosphate + phosphate. Its pathway is carbohydrate biosynthesis; 3-deoxy-D-manno-octulosonate biosynthesis; 3-deoxy-D-manno-octulosonate from D-ribulose 5-phosphate: step 2/3. The protein operates within bacterial outer membrane biogenesis; lipopolysaccharide biosynthesis. The sequence is that of 2-dehydro-3-deoxyphosphooctonate aldolase from Geobacter sp. (strain M21).